A 108-amino-acid polypeptide reads, in one-letter code: Thioredoxin (108 aa).

In terms of domain architecture, Thioredoxin spans Gly-2–Gly-108. The cysteines at positions 32 and 35 are disulfide-linked.

Belongs to the thioredoxin family.

Functionally, participates in various redox reactions through the reversible oxidation of its active center dithiol to a disulfide and catalyzes dithiol-disulfide exchange reactions. The sequence is that of Thioredoxin (trxA) from Chlorobaculum thiosulfatiphilum (Chlorobium limicola f.sp. thiosulfatophilum).